A 502-amino-acid polypeptide reads, in one-letter code: Tyrosine-protein kinase receptor old-1 (502 aa).

An N-terminal signal peptide occupies residues 1 to 19 (MKGTLIFVVFYSSYGFAHC). Over 20 to 58 (NTILRSSSLSRNFEDSLRRIPRSTDKDETGFEDSNVQEV) the chain is Extracellular. Residues 59–79 (IFILLYCLFVALAILICGLII) form a helical membrane-spanning segment. The Cytoplasmic segment spans residues 80 to 502 (FYNSRKRELR…WLSDEKHCDS (423 aa)). The segment at 99–140 (LLEPTSADHKRRNSSNIVPPEPTPYPITSGESDLRQTPSRLS) is disordered. A compositionally biased stretch (polar residues) spans 127 to 140 (SGESDLRQTPSRLS). In terms of domain architecture, Protein kinase spans 175 to 473 (ISKGRPLGSG…ELKTTSNEYF (299 aa)). Residues 181–189 (LGSGEFGII) and Lys213 each bind ATP. Catalysis depends on Asp321, which acts as the Proton acceptor.

The protein belongs to the protein kinase superfamily. Tyr protein kinase family.

The protein localises to the cell membrane. It carries out the reaction L-tyrosyl-[protein] + ATP = O-phospho-L-tyrosyl-[protein] + ADP + H(+). In terms of biological role, receptor tyrosine kinase which plays a role in promoting longevity and resistance to stresses including UV irradiation and high temperatures, probably downstream of daf-16. This chain is Tyrosine-protein kinase receptor old-1, found in Caenorhabditis elegans.